Reading from the N-terminus, the 122-residue chain is Large ribosomal subunit protein uL18 (122 aa).

This sequence belongs to the universal ribosomal protein uL18 family. As to quaternary structure, part of the 50S ribosomal subunit; part of the 5S rRNA/L5/L18/L25 subcomplex. Contacts the 5S and 23S rRNAs.

In terms of biological role, this is one of the proteins that bind and probably mediate the attachment of the 5S RNA into the large ribosomal subunit, where it forms part of the central protuberance. The chain is Large ribosomal subunit protein uL18 from Kosmotoga olearia (strain ATCC BAA-1733 / DSM 21960 / TBF 19.5.1).